The primary structure comprises 414 residues: Gamma-glutamyl phosphate reductase (414 aa).

Belongs to the gamma-glutamyl phosphate reductase family.

The protein localises to the cytoplasm. It carries out the reaction L-glutamate 5-semialdehyde + phosphate + NADP(+) = L-glutamyl 5-phosphate + NADPH + H(+). The protein operates within amino-acid biosynthesis; L-proline biosynthesis; L-glutamate 5-semialdehyde from L-glutamate: step 2/2. Functionally, catalyzes the NADPH-dependent reduction of L-glutamate 5-phosphate into L-glutamate 5-semialdehyde and phosphate. The product spontaneously undergoes cyclization to form 1-pyrroline-5-carboxylate. This chain is Gamma-glutamyl phosphate reductase, found in Clostridium botulinum (strain Alaska E43 / Type E3).